The chain runs to 231 residues: MSRLLIVVSLSSAFALAGCVAPAPKPNDPYYAPVLPRTPLPAAQNSGAIYQAGFETYLYDDRKAYRVGDIITITLAERTQASKNASSSISKDSSANIGLGSLFGGAVSMANPLTGNSMSLGAEYDASRDTSGSGQAGQSNSLSGSITVTVSEVLPNGILAVRGEKWMTLNTGDELVRIAGLVRQDDIATDNTVSSTRIADARITYSGTGAFADASQPGWLDRFFMSPLWPF.

The signal sequence occupies residues 1–18; that stretch reads MSRLLIVVSLSSAFALAG. A lipid anchor (N-palmitoyl cysteine) is attached at Cys-19. The S-diacylglycerol cysteine moiety is linked to residue Cys-19.

It belongs to the FlgH family. As to quaternary structure, the basal body constitutes a major portion of the flagellar organelle and consists of four rings (L,P,S, and M) mounted on a central rod.

The protein resides in the cell outer membrane. The protein localises to the bacterial flagellum basal body. Its function is as follows. Assembles around the rod to form the L-ring and probably protects the motor/basal body from shearing forces during rotation. The chain is Flagellar L-ring protein from Stutzerimonas stutzeri (strain A1501) (Pseudomonas stutzeri).